A 298-amino-acid polypeptide reads, in one-letter code: GTPase Era (298 aa).

The 169-residue stretch at 8–176 folds into the Era-type G domain; it reads RCGRIAVIGR…VSDLLALLPE (169 aa). The G1 stretch occupies residues 16 to 23; the sequence is GRPNVGKS. Position 16-23 (16-23) interacts with GTP; that stretch reads GRPNVGKS. Positions 42 to 46 are G2; sequence QTTRH. A G3 region spans residues 63–66; sequence DTPG. GTP contacts are provided by residues 63-67 and 125-128; these read DTPGL and NKID. The segment at 125–128 is G4; the sequence is NKID. Residues 155-157 form a G5 region; sequence VSA. In terms of domain architecture, KH type-2 spans 199–283; that stretch reads VREQVMRQLG…FLETWVRVRK (85 aa).

This sequence belongs to the TRAFAC class TrmE-Era-EngA-EngB-Septin-like GTPase superfamily. Era GTPase family. As to quaternary structure, monomer.

The protein localises to the cytoplasm. Its subcellular location is the cell inner membrane. An essential GTPase that binds both GDP and GTP, with rapid nucleotide exchange. Plays a role in 16S rRNA processing and 30S ribosomal subunit biogenesis and possibly also in cell cycle regulation and energy metabolism. The chain is GTPase Era from Xylella fastidiosa (strain Temecula1 / ATCC 700964).